The following is a 362-amino-acid chain: E3 ubiquitin-protein ligase rififylin (362 aa).

The interval 17-37 (ETPPPQGARTQAYSNPGYSSF) is disordered. The span at 24-37 (ARTQAYSNPGYSSF) shows a compositional bias: polar residues. The segment at 41–93 (TGSEPSCKACGVHFASTTRKQTCLDCKKNFCMTCSSQEGNGPRLCLLCLRFRA) adopts an FYVE-type zinc-finger fold. The 20-residue stretch at 101–120 (LMKMKVKDLRDYLSLHDIST) folds into the SAP 1 domain. A disordered region spans residues 162 to 183 (LTQPQSSTVPPTSPGLPSSPAQ). Ser225, Ser228, Ser231, and Ser239 each carry phosphoserine. An SAP 2 domain is found at 249–263 (IEGLTVRQLKEILAR). An RING-type zinc finger spans residues 315-350 (CKICMDSPIDCVLLECGHMVTCTKCGKRMNECPICR).

In terms of assembly, interacts with CASP8 and CASP10. Interacts with RIPK1 (via protein kinase domain); involved in RIPK1 ubiquitination. Interacts with PRR5L. Interacts (via RING-type zinc finger) with p53/TP53; involved in p53/TP53 ubiquitination. Interacts (via RING-type zinc finger) with MDM2; the interaction stabilizes MDM2. Autoubiquitinated. Post-translationally, palmitoylated. In terms of processing, undergoes caspase-mediated cleavage upon death-receptor activation, by TNFSF10 for instance. May be mediated by the caspases CASP8 and CASP10 in a negative feedback loop. In terms of tissue distribution, ubiquitous. Detected in cerebrum, cerebellum, midbrain, brain stem, hippocampus, striatum, liver, heart, lung, kidney, muscle, spleen and testis.

The protein localises to the cytoplasm. It localises to the cytosol. The protein resides in the cell membrane. Its subcellular location is the recycling endosome membrane. It carries out the reaction S-ubiquitinyl-[E2 ubiquitin-conjugating enzyme]-L-cysteine + [acceptor protein]-L-lysine = [E2 ubiquitin-conjugating enzyme]-L-cysteine + N(6)-ubiquitinyl-[acceptor protein]-L-lysine.. The protein operates within protein modification; protein ubiquitination. In terms of biological role, E3 ubiquitin-protein ligase that regulates several biological processes through the ubiquitin-mediated proteasomal degradation of various target proteins. Mediates 'Lys-48'-linked polyubiquitination of PRR5L and its subsequent proteasomal degradation thereby indirectly regulating cell migration through the mTORC2 complex. Also ubiquitinates the caspases CASP8 and CASP10, promoting their proteasomal degradation, to negatively regulate apoptosis downstream of death domain receptors. Also negatively regulates the tumor necrosis factor-mediated signaling pathway through targeting of RIPK1 to ubiquitin-mediated proteasomal degradation. Negatively regulates p53/TP53 through its direct ubiquitination and targeting to proteasomal degradation. Indirectly, may also negatively regulate p53/TP53 through ubiquitination and degradation of SFN. May also play a role in endocytic recycling. The sequence is that of E3 ubiquitin-protein ligase rififylin from Rattus norvegicus (Rat).